A 221-amino-acid chain; its full sequence is PKHD-type hydroxylase P9303_20491 (221 aa).

Residues His-80–Ser-174 form the Fe2OG dioxygenase domain. The Fe cation site is built by His-98, Asp-100, and His-155. Arg-165 contributes to the 2-oxoglutarate binding site.

Fe(2+) serves as cofactor. The cofactor is L-ascorbate.

This Prochlorococcus marinus (strain MIT 9303) protein is PKHD-type hydroxylase P9303_20491.